Consider the following 305-residue polypeptide: Protoheme IX farnesyltransferase (305 aa).

9 helical membrane-spanning segments follow: residues 31 to 51 (VISL…YSVH), 52 to 72 (PFIA…AGAI), 96 to 118 (VIES…FFMA), 123 to 145 (LLAS…IWLK), 151 to 171 (NIVI…AAVS), 179 to 199 (IILF…LALF), 225 to 245 (ILIY…IGMN), 247 to 267 (FIYL…AGSL), and 281 to 301 (FAYS…TNTI).

It belongs to the UbiA prenyltransferase family. Protoheme IX farnesyltransferase subfamily.

The protein localises to the cell inner membrane. The catalysed reaction is heme b + (2E,6E)-farnesyl diphosphate + H2O = Fe(II)-heme o + diphosphate. Its pathway is porphyrin-containing compound metabolism; heme O biosynthesis; heme O from protoheme: step 1/1. Converts heme B (protoheme IX) to heme O by substitution of the vinyl group on carbon 2 of heme B porphyrin ring with a hydroxyethyl farnesyl side group. This chain is Protoheme IX farnesyltransferase, found in Rickettsia massiliae (strain Mtu5).